The primary structure comprises 410 residues: MRYLLSAPSQIKATIQLPASKSISNRALIIHALSKGDDVLSNLSDCDDTQVMIKALTEGNEVIDILAAGTAMRFLTAYLSSTPGIHTITGTERMQQRPIQILVNALRELGAHIEYVRNEGFPPLRIEGRELTGSEITLKGNVSSQYISALLMIGPVLKNGLQLRLTGEIVSRPYINLTLQLMKDFGASASWTSDQSILVDPQPYHCLPFTVESDWSAASYWYQIAALSPQANIELTGLFRHSYQGDSRGAEVFARLGVATEYTETGIRLKKNGTCVERLDEDFVDIPDLAQTFVVTCALLNVPFRFTGLQSLKIKETDRIEALKTEMKKLGYILHDKNDSILSWDGERVEQQACPVIKTYEDHRMAMAFAPAAIHYPTIQIDEPQVVSKSYPGYWNDLRKAGFGIKVGEE.

Positions 21, 22, and 26 each coordinate 3-phosphoshikimate. Lys-21 provides a ligand contact to phosphoenolpyruvate. Residues Gly-69 and Arg-97 each coordinate phosphoenolpyruvate. Positions 143, 144, 145, 171, 288, and 315 each coordinate 3-phosphoshikimate. Gln-145 lines the phosphoenolpyruvate pocket. Catalysis depends on Asp-288, which acts as the Proton acceptor. Arg-319, Arg-364, and Lys-389 together coordinate phosphoenolpyruvate.

It belongs to the EPSP synthase family. As to quaternary structure, monomer.

It localises to the cytoplasm. The enzyme catalyses 3-phosphoshikimate + phosphoenolpyruvate = 5-O-(1-carboxyvinyl)-3-phosphoshikimate + phosphate. It functions in the pathway metabolic intermediate biosynthesis; chorismate biosynthesis; chorismate from D-erythrose 4-phosphate and phosphoenolpyruvate: step 6/7. Functionally, catalyzes the transfer of the enolpyruvyl moiety of phosphoenolpyruvate (PEP) to the 5-hydroxyl of shikimate-3-phosphate (S3P) to produce enolpyruvyl shikimate-3-phosphate and inorganic phosphate. This is 3-phosphoshikimate 1-carboxyvinyltransferase from Bacteroides fragilis (strain YCH46).